The sequence spans 186 residues: Peptidyl-tRNA hydrolase (186 aa).

Residue Y14 coordinates tRNA. H19 functions as the Proton acceptor in the catalytic mechanism. Y61, N63, and N107 together coordinate tRNA.

This sequence belongs to the PTH family. In terms of assembly, monomer.

Its subcellular location is the cytoplasm. It catalyses the reaction an N-acyl-L-alpha-aminoacyl-tRNA + H2O = an N-acyl-L-amino acid + a tRNA + H(+). Its function is as follows. Hydrolyzes ribosome-free peptidyl-tRNAs (with 1 or more amino acids incorporated), which drop off the ribosome during protein synthesis, or as a result of ribosome stalling. In terms of biological role, catalyzes the release of premature peptidyl moieties from peptidyl-tRNA molecules trapped in stalled 50S ribosomal subunits, and thus maintains levels of free tRNAs and 50S ribosomes. This chain is Peptidyl-tRNA hydrolase, found in Helicobacter pylori (strain HPAG1).